A 228-amino-acid chain; its full sequence is Octanoyltransferase (228 aa).

Residues 30 to 213 (NKVEDIMLLL…YFSRVFDFEP (184 aa)) form the BPL/LPL catalytic domain. Substrate contacts are provided by residues 75-82 (RGGDVTYH), 143-145 (AIG), and 156-158 (GFA). Residue cysteine 174 is the Acyl-thioester intermediate of the active site.

It belongs to the LipB family.

The protein localises to the cytoplasm. The catalysed reaction is octanoyl-[ACP] + L-lysyl-[protein] = N(6)-octanoyl-L-lysyl-[protein] + holo-[ACP] + H(+). It functions in the pathway protein modification; protein lipoylation via endogenous pathway; protein N(6)-(lipoyl)lysine from octanoyl-[acyl-carrier-protein]: step 1/2. Functionally, catalyzes the transfer of endogenously produced octanoic acid from octanoyl-acyl-carrier-protein onto the lipoyl domains of lipoate-dependent enzymes. Lipoyl-ACP can also act as a substrate although octanoyl-ACP is likely to be the physiological substrate. This chain is Octanoyltransferase, found in Desulforamulus reducens (strain ATCC BAA-1160 / DSM 100696 / MI-1) (Desulfotomaculum reducens).